Here is a 603-residue protein sequence, read N- to C-terminus: Grainyhead-like protein 3 homolog (603 aa).

The interval 30–95 is transcription activation; it reads EAWKTYLENP…QGKKFYHSMD (66 aa). Residues 226-461 form the Grh/CP2 DB domain; that stretch reads GLKSDFEYTL…DLETQPVLFI (236 aa).

This sequence belongs to the grh/CP2 family. Grainyhead subfamily. As to quaternary structure, homodimer, also forms heterodimers with GRHL1 and GRHL2. Interacts with LMO4.

It localises to the nucleus. Functionally, transcription factor playing important roles in primary neurulation and in the differentiation of stratified epithelia of both ectodermal and endodermal origin. Binds directly to the consensus DNA sequence 5'-AACCGGTT-3' acting as an activator and repressor on distinct target genes. Essential for epidermal differentiation and barrier formation at the end of embryogenesis with TGM3 as critical direct target. Exhibits functional redundancy with GRHL2 in epidermal morphogenetic events such as eyelid fusion and epidermal wound repair. Despite being dispensable during normal epidermal homeostasis in the adulthood, is again required for barrier repair after immune-mediated epidermal damage, regulates distinct gene batteries in embryonic epidermal differentiation and adult epidermal barrier reformation after injury. Plays unique and cooperative roles with GRHL2 in establishing distinct zones of primary neurulation. Essential for spinal closure, functions cooperatively with GRHL2 in closure 2 (forebrain/midbrain boundary) and posterior neuropore closure. Also required for proper development of the oral periderm. No genetic interaction with GRHL1, no functional cooperativity due to diverse target gene selectivity. The polypeptide is Grainyhead-like protein 3 homolog (Mus musculus (Mouse)).